Consider the following 185-residue polypeptide: MSKEVLTQTKEKMEKAIAAYQRELATVRAGRANPSLLDKVTVEYYGAQTPLNQLSSINVPEARMLVITPYDKTAIGDIEKAILKADLGLTPTSDGNMIRIAIPALTEERRKELVKVVKKYAEEAKVAVRNVRRDANDDLKKLEKNGDITEDELRASTEDVQKLTDEYVSKIDSVTKDKEKEIMEV.

Belongs to the RRF family.

It is found in the cytoplasm. Responsible for the release of ribosomes from messenger RNA at the termination of protein biosynthesis. May increase the efficiency of translation by recycling ribosomes from one round of translation to another. In terms of biological role, plays a role in sporulation. The protein is Ribosome-recycling factor of Bacillus subtilis (strain 168).